The sequence spans 545 residues: CTP synthase (545 aa).

The interval 1 to 266 (MTTNYIFVTG…DDYICKRFSL (266 aa)) is amidoligase domain. Ser14 is a binding site for CTP. Residue Ser14 participates in UTP binding. Residues 15–20 (SLGKGI) and Asp72 each bind ATP. Positions 72 and 140 each coordinate Mg(2+). Residues 147–149 (DIE), 187–192 (KTKPTQ), and Lys223 each bind CTP. UTP is bound by residues 187–192 (KTKPTQ) and Lys223. 239–241 (KDV) is a binding site for ATP. Residues 291–542 (TIGMVGKYIE…VKAANEHQKR (252 aa)) enclose the Glutamine amidotransferase type-1 domain. Gly352 contributes to the L-glutamine binding site. Cys379 serves as the catalytic Nucleophile; for glutamine hydrolysis. L-glutamine contacts are provided by residues 380–383 (LGMQ), Glu403, and Arg470. Residues His515 and Glu517 contribute to the active site.

It belongs to the CTP synthase family. In terms of assembly, homotetramer.

It carries out the reaction UTP + L-glutamine + ATP + H2O = CTP + L-glutamate + ADP + phosphate + 2 H(+). The catalysed reaction is L-glutamine + H2O = L-glutamate + NH4(+). The enzyme catalyses UTP + NH4(+) + ATP = CTP + ADP + phosphate + 2 H(+). It functions in the pathway pyrimidine metabolism; CTP biosynthesis via de novo pathway; CTP from UDP: step 2/2. Allosterically activated by GTP, when glutamine is the substrate; GTP has no effect on the reaction when ammonia is the substrate. The allosteric effector GTP functions by stabilizing the protein conformation that binds the tetrahedral intermediate(s) formed during glutamine hydrolysis. Inhibited by the product CTP, via allosteric rather than competitive inhibition. Functionally, catalyzes the ATP-dependent amination of UTP to CTP with either L-glutamine or ammonia as the source of nitrogen. Regulates intracellular CTP levels through interactions with the four ribonucleotide triphosphates. In Salmonella paratyphi A (strain ATCC 9150 / SARB42), this protein is CTP synthase.